Reading from the N-terminus, the 228-residue chain is UPF0173 metal-dependent hydrolase ABC2731 (228 aa).

Belongs to the UPF0173 family.

The sequence is that of UPF0173 metal-dependent hydrolase ABC2731 from Shouchella clausii (strain KSM-K16) (Alkalihalobacillus clausii).